We begin with the raw amino-acid sequence, 95 residues long: uncharacterized protein (95 aa).

Composition is skewed to basic and acidic residues over residues 1–28 and 41–53; these read MRRA…KERC and DERV…KGRP. The segment at 1 to 73 is disordered; it reads MRRAEVKRSA…RTSRAGSSWQ (73 aa).

This is an uncharacterized protein from Homo sapiens (Human).